A 599-amino-acid polypeptide reads, in one-letter code: Translation initiation factor IF-2 (599 aa).

Residues 111–278 (PRPPIITVMG…SILLLAEILE (168 aa)) enclose the tr-type G domain. The tract at residues 120–127 (GHVDHGKT) is G1. Residue 120–127 (GHVDHGKT) participates in GTP binding. The interval 145 to 149 (GITQH) is G2. The tract at residues 166-169 (DTPG) is G3. GTP is bound by residues 166 to 170 (DTPGH) and 220 to 223 (NKMD). The G4 stretch occupies residues 220-223 (NKMD). Residues 256-258 (SAL) are G5.

It belongs to the TRAFAC class translation factor GTPase superfamily. Classic translation factor GTPase family. IF-2 subfamily.

The protein localises to the cytoplasm. One of the essential components for the initiation of protein synthesis. Protects formylmethionyl-tRNA from spontaneous hydrolysis and promotes its binding to the 30S ribosomal subunits. Also involved in the hydrolysis of GTP during the formation of the 70S ribosomal complex. This chain is Translation initiation factor IF-2, found in Mesomycoplasma hyopneumoniae (strain 7448) (Mycoplasma hyopneumoniae).